The primary structure comprises 432 residues: 7-dehydrocholesterol reductase (432 aa).

Transmembrane regions (helical) follow at residues 12 to 34 (YASM…YTMV), 64 to 86 (LIAW…LLPG), 107 to 126 (LAAY…FGIF), 136 to 155 (GEIF…LLYI), 195 to 212 (FTNC…AVTY), 227 to 249 (MLVN…AGYW), 261 to 283 (FYIC…MYLV), 287 to 309 (VELG…YINY), and 371 to 393 (SAFF…VIFL).

The protein belongs to the ERG4/ERG24 family.

Its subcellular location is the endoplasmic reticulum membrane. It catalyses the reaction cholesterol + NADP(+) = 7-dehydrocholesterol + NADPH + H(+). The protein operates within lipid metabolism; steroid biosynthesis. Functionally, production of cholesterol by reduction of C7-C8 double bond of 7-dehydrocholesterol (7-DHC). Lesions in the gene coding for the enzyme cause dwarfism. The protein is 7-dehydrocholesterol reductase (DWF5) of Arabidopsis thaliana (Mouse-ear cress).